The primary structure comprises 104 residues: Large ribosomal subunit protein uL24 (104 aa).

This sequence belongs to the universal ribosomal protein uL24 family. In terms of assembly, part of the 50S ribosomal subunit.

One of two assembly initiator proteins, it binds directly to the 5'-end of the 23S rRNA, where it nucleates assembly of the 50S subunit. Functionally, one of the proteins that surrounds the polypeptide exit tunnel on the outside of the subunit. The sequence is that of Large ribosomal subunit protein uL24 from Pseudomonas fluorescens (strain Pf0-1).